We begin with the raw amino-acid sequence, 453 residues long: Charged multivesicular body protein 7 (453 aa).

The interval 1 to 22 (MWSPEREAEAPAGGDPAGLLPP) is disordered. Residues 10–22 (APAGGDPAGLLPP) show a composition bias toward low complexity. S232 is subject to Phosphoserine. Positions 243 to 312 (QLMQSEQLLS…DTVQGILDRI (70 aa)) form a coiled coil. The span at 392 to 403 (TKEPLDLPDNPR) shows a compositional bias: basic and acidic residues. 2 disordered regions span residues 392–417 (TKEPLDLPDNPRNRHFTNSVPNPRIS) and 431–453 (SEGGLVPSSKSPKRQLEPTLKPL). Phosphothreonine is present on T408. Residues S410, S417, S431, and S441 each carry the phosphoserine modification.

The protein belongs to the SNF7 family. Interacts with CHMP4B, but not with VPS25. Interacts with LEMD2 (via C-terminus).

Its subcellular location is the cytoplasm. It localises to the nucleus envelope. In terms of biological role, ESCRT-III-like protein required to recruit the ESCRT-III complex to the nuclear envelope (NE) during late anaphase. Together with SPAST, the ESCRT-III complex promotes NE sealing and mitotic spindle disassembly during late anaphase. Recruited to the reforming NE during anaphase by LEMD2. Plays a role in the endosomal sorting pathway. The protein is Charged multivesicular body protein 7 (CHMP7) of Homo sapiens (Human).